The chain runs to 274 residues: Mitochondrial outer membrane protein porin 1 (274 aa).

It belongs to the eukaryotic mitochondrial porin (TC 1.B.8.1) family. As to expression, expressed in shoots and roots. Also expressed in callus, leaves, panicles, sheaths and stems.

The protein localises to the mitochondrion outer membrane. In terms of biological role, forms a channel through the mitochondrial outer membrane that allows diffusion of small hydrophilic molecules. The channel adopts an open conformation at low or zero membrane potential and a closed conformation at potentials above 30-40 mV. The open state has a weak anion selectivity whereas the closed state is cation-selective. This is Mitochondrial outer membrane protein porin 1 (VDAC1) from Oryza sativa subsp. japonica (Rice).